We begin with the raw amino-acid sequence, 564 residues long: Probable cysteine--tRNA ligase, mitochondrial (564 aa).

A Zn(2+)-binding site is contributed by C78. G79 lines the L-cysteine pocket. The 'HIGH' region motif lies at P80 to H90. An L-cysteine-binding site is contributed by T119. The 'KIIK' region signature appears at K124 to K127. Zn(2+) contacts are provided by C257, H282, and E286. H282 provides a ligand contact to L-cysteine. The 'KMSKS' region signature appears at K317–S321. K320 provides a ligand contact to ATP.

The protein belongs to the class-I aminoacyl-tRNA synthetase family. Requires Zn(2+) as cofactor.

Its subcellular location is the mitochondrion. The catalysed reaction is tRNA(Cys) + L-cysteine + ATP = L-cysteinyl-tRNA(Cys) + AMP + diphosphate. It carries out the reaction 2 L-cysteine = S-sulfanyl-L-cysteine + L-alanine. The enzyme catalyses S-sulfanyl-L-cysteine + L-cysteine = S-disulfanyl-L-cysteine + L-alanine. It catalyses the reaction S-sulfanyl-L-cysteine + tRNA(Cys) + ATP = (S)-sulfanyl-L-cysteinyl-tRNA(Cys) + AMP + diphosphate. The catalysed reaction is S-disulfanyl-L-cysteine + tRNA(Cys) + ATP = (S)-disulfanyl-L-cysteinyl-tRNA(Cys) + AMP + diphosphate. Its function is as follows. Mitochondrial cysteine-specific aminoacyl-tRNA synthetase that catalyzes the ATP-dependent ligation of cysteine to tRNA(Cys). Functionally, in addition to its role as an aminoacyl-tRNA synthetase, has also cysteine persulfide synthase activity. Produces reactive persulfide species such as cysteine persulfide (CysSSH) from substrate cysteine and mediate direct incorporation of CysSSH into proteins during translations, resulting in protein persulfides and polysulfides. CysSSHs behave as potent antioxidants and cellular protectants. The protein is Probable cysteine--tRNA ligase, mitochondrial of Homo sapiens (Human).